A 266-amino-acid polypeptide reads, in one-letter code: Glucosamine-6-phosphate deaminase (266 aa).

D72 (proton acceptor; for enolization step) is an active-site residue. The For ring-opening step role is filled by D141. Residue H143 is the Proton acceptor; for ring-opening step of the active site. The active-site For ring-opening step is the E148.

The protein belongs to the glucosamine/galactosamine-6-phosphate isomerase family. NagB subfamily. In terms of assembly, homohexamer.

It carries out the reaction alpha-D-glucosamine 6-phosphate + H2O = beta-D-fructose 6-phosphate + NH4(+). It participates in amino-sugar metabolism; N-acetylneuraminate degradation; D-fructose 6-phosphate from N-acetylneuraminate: step 5/5. With respect to regulation, allosterically activated by N-acetylglucosamine 6-phosphate (GlcNAc6P). Catalyzes the reversible isomerization-deamination of glucosamine 6-phosphate (GlcN6P) to form fructose 6-phosphate (Fru6P) and ammonium ion. This Yersinia pestis bv. Antiqua (strain Antiqua) protein is Glucosamine-6-phosphate deaminase.